Here is a 120-residue protein sequence, read N- to C-terminus: uncharacterized protein (120 aa).

Helical transmembrane passes span 9–29 (WPDFLSVVLLALLLWISLFCG), 32–52 (ALMFCCASVFSVALCVAADCL), 68–88 (FVWPLTWLGSLSGLGLAVMAT), and 94–114 (GPEHVIWALAGLLTFWLSFRF).

It is found in the membrane. This is an uncharacterized protein from Escherichia phage Mu (Bacteriophage Mu).